Here is a 177-residue protein sequence, read N- to C-terminus: Large ribosomal subunit protein uL6 (177 aa).

This sequence belongs to the universal ribosomal protein uL6 family. In terms of assembly, part of the 50S ribosomal subunit.

This protein binds to the 23S rRNA, and is important in its secondary structure. It is located near the subunit interface in the base of the L7/L12 stalk, and near the tRNA binding site of the peptidyltransferase center. The polypeptide is Large ribosomal subunit protein uL6 (Alkalilimnicola ehrlichii (strain ATCC BAA-1101 / DSM 17681 / MLHE-1)).